A 289-amino-acid polypeptide reads, in one-letter code: Ribosomal RNA small subunit methyltransferase H (289 aa).

Residues glycine 40–histidine 42, aspartate 60, phenylalanine 84, aspartate 106, and glutamine 113 each bind S-adenosyl-L-methionine.

The protein belongs to the methyltransferase superfamily. RsmH family.

It localises to the cytoplasm. The enzyme catalyses cytidine(1402) in 16S rRNA + S-adenosyl-L-methionine = N(4)-methylcytidine(1402) in 16S rRNA + S-adenosyl-L-homocysteine + H(+). Its function is as follows. Specifically methylates the N4 position of cytidine in position 1402 (C1402) of 16S rRNA. The protein is Ribosomal RNA small subunit methyltransferase H of Haemophilus influenzae (strain PittGG).